Here is a 268-residue protein sequence, read N- to C-terminus: Malonyl-[acyl-carrier protein] O-methyltransferase (268 aa).

Belongs to the methyltransferase superfamily.

The catalysed reaction is malonyl-[ACP] + S-adenosyl-L-methionine = malonyl-[ACP] methyl ester + S-adenosyl-L-homocysteine. It participates in cofactor biosynthesis; biotin biosynthesis. Its function is as follows. Converts the free carboxyl group of a malonyl-thioester to its methyl ester by transfer of a methyl group from S-adenosyl-L-methionine (SAM). It allows to synthesize pimeloyl-ACP via the fatty acid synthetic pathway. This Prosthecochloris aestuarii (strain DSM 271 / SK 413) protein is Malonyl-[acyl-carrier protein] O-methyltransferase.